Here is a 360-residue protein sequence, read N- to C-terminus: Isocitrate dehydrogenase [NAD] regulatory subunit B, mitochondrial (360 aa).

Residues 1-113 (MLGRLRTVVK…MELRKALDLY (113 aa)) constitute a mitochondrion transit peptide. Positions 101, 103, 107, and 140 each coordinate substrate. Residue D227 coordinates Mg(2+). Residues 284-290 (HHVAADI) and N297 contribute to the NADP(+) site.

This sequence belongs to the isocitrate and isopropylmalate dehydrogenases family. In terms of assembly, heterooligomer of catalytic and regulatory subunits. The cofactor is Mg(2+). It depends on Mn(2+) as a cofactor.

It is found in the mitochondrion. The enzyme catalyses D-threo-isocitrate + NAD(+) = 2-oxoglutarate + CO2 + NADH. Performs an essential role in the oxidative function of the citric acid cycle. In Dictyostelium discoideum (Social amoeba), this protein is Isocitrate dehydrogenase [NAD] regulatory subunit B, mitochondrial (idhB).